The chain runs to 906 residues: Protein translocase subunit SecA (906 aa).

Residues Gln-89, Gly-107–Thr-111, and Asp-502 each bind ATP. Cys-890, Cys-892, Cys-901, and His-902 together coordinate Zn(2+).

It belongs to the SecA family. In terms of assembly, monomer and homodimer. Part of the essential Sec protein translocation apparatus which comprises SecA, SecYEG and auxiliary proteins SecDF-YajC and YidC. The cofactor is Zn(2+).

It localises to the cell inner membrane. Its subcellular location is the cytoplasm. It carries out the reaction ATP + H2O + cellular proteinSide 1 = ADP + phosphate + cellular proteinSide 2.. Its function is as follows. Part of the Sec protein translocase complex. Interacts with the SecYEG preprotein conducting channel. Has a central role in coupling the hydrolysis of ATP to the transfer of proteins into and across the cell membrane, serving both as a receptor for the preprotein-SecB complex and as an ATP-driven molecular motor driving the stepwise translocation of polypeptide chains across the membrane. The protein is Protein translocase subunit SecA of Bartonella quintana (strain Toulouse) (Rochalimaea quintana).